The following is a 146-amino-acid chain: Hemoglobin subunit beta-2 (146 aa).

A Globin domain is found at 2–146 (EWTNFERATI…VVSSLGKQYH (145 aa)). Residues His-63 and His-92 each contribute to the heme b site.

It belongs to the globin family. As to quaternary structure, hb2 is a heterotetramer of two alpha chains and two beta-2 chains. Red blood cells.

In terms of biological role, involved in oxygen transport from gills to the various peripheral tissues. The chain is Hemoglobin subunit beta-2 (hbb2) from Cygnodraco mawsoni (Antarctic dragonfish).